We begin with the raw amino-acid sequence, 173 residues long: Co-chaperone protein HscB homolog (173 aa).

Residues 5–77 (CHFALFELQP…AQRARYLLTI (73 aa)) form the J domain.

Belongs to the HscB family. Interacts with HscA and stimulates its ATPase activity.

Its function is as follows. Co-chaperone involved in the maturation of iron-sulfur cluster-containing proteins. Seems to help targeting proteins to be folded toward HscA. The sequence is that of Co-chaperone protein HscB homolog from Pseudomonas fluorescens (strain Pf0-1).